The chain runs to 454 residues: Allantoinase (454 aa).

Positions 60, 62, 147, 183, 239, and 312 each coordinate Zn(2+). Residue K147 is modified to N6-carboxylysine.

The protein belongs to the metallo-dependent hydrolases superfamily. Allantoinase family. In terms of assembly, homotetramer. The cofactor is Zn(2+). Post-translationally, carboxylation allows a single lysine to coordinate two zinc ions.

The catalysed reaction is (S)-allantoin + H2O = allantoate + H(+). Its pathway is nitrogen metabolism; (S)-allantoin degradation; allantoate from (S)-allantoin: step 1/1. Catalyzes the conversion of allantoin (5-ureidohydantoin) to allantoic acid by hydrolytic cleavage of the five-member hydantoin ring. In Bacillus velezensis (strain DSM 23117 / BGSC 10A6 / LMG 26770 / FZB42) (Bacillus amyloliquefaciens subsp. plantarum), this protein is Allantoinase.